Consider the following 386-residue polypeptide: DNA-directed RNA polymerase subunit Rpo1C (386 aa).

Belongs to the RNA polymerase beta' chain family. In terms of assembly, part of the RNA polymerase complex.

It localises to the cytoplasm. It carries out the reaction RNA(n) + a ribonucleoside 5'-triphosphate = RNA(n+1) + diphosphate. Its function is as follows. DNA-dependent RNA polymerase (RNAP) catalyzes the transcription of DNA into RNA using the four ribonucleoside triphosphates as substrates. Forms part of the jaw domain. The chain is DNA-directed RNA polymerase subunit Rpo1C from Methanococcus maripaludis (strain C6 / ATCC BAA-1332).